We begin with the raw amino-acid sequence, 100 residues long: NAD(P)H-quinone oxidoreductase subunit 4L, chloroplastic (100 aa).

The next 3 helical transmembrane spans lie at 1 to 21 (MLEH…YGLV), 31 to 51 (MCLE…SNFF), and 63 to 83 (IFVI…VLAI).

Belongs to the complex I subunit 4L family. As to quaternary structure, NDH is composed of at least 16 different subunits, 5 of which are encoded in the nucleus.

It is found in the plastid. It localises to the chloroplast thylakoid membrane. The catalysed reaction is a plastoquinone + NADH + (n+1) H(+)(in) = a plastoquinol + NAD(+) + n H(+)(out). The enzyme catalyses a plastoquinone + NADPH + (n+1) H(+)(in) = a plastoquinol + NADP(+) + n H(+)(out). Its function is as follows. NDH shuttles electrons from NAD(P)H:plastoquinone, via FMN and iron-sulfur (Fe-S) centers, to quinones in the photosynthetic chain and possibly in a chloroplast respiratory chain. The immediate electron acceptor for the enzyme in this species is believed to be plastoquinone. Couples the redox reaction to proton translocation, and thus conserves the redox energy in a proton gradient. The sequence is that of NAD(P)H-quinone oxidoreductase subunit 4L, chloroplastic from Cryptomeria japonica (Japanese cedar).